The primary structure comprises 333 residues: Cytochrome f (333 aa).

Positions 1–44 (MRNACTRARLTRTARAMVKTLFIAIASVTFFFTSDLALPQSAAA) are cleaved as a signal peptide. Residues Tyr45, Cys66, Cys69, and His70 each contribute to the heme site. Residues 299 to 318 (VGWLIAFVALVMLAQVMLVL) form a helical membrane-spanning segment.

The protein belongs to the cytochrome f family. The 4 large subunits of the cytochrome b6-f complex are cytochrome b6, subunit IV (17 kDa polypeptide, PetD), cytochrome f and the Rieske protein, while the 4 small subunits are PetG, PetL, PetM and PetN. The complex functions as a dimer. The cofactor is heme.

It localises to the cellular thylakoid membrane. Functionally, component of the cytochrome b6-f complex, which mediates electron transfer between photosystem II (PSII) and photosystem I (PSI), cyclic electron flow around PSI, and state transitions. This Trichormus variabilis (strain ATCC 29413 / PCC 7937) (Anabaena variabilis) protein is Cytochrome f.